The primary structure comprises 426 residues: Bone morphogenetic protein 7 (426 aa).

A signal peptide spans methionine 1–serine 22. A propeptide spanning residues serine 23–arginine 282 is cleaved from the precursor. Residues asparagine 177, asparagine 307, and asparagine 367 are each glycosylated (N-linked (GlcNAc...) asparagine). 3 cysteine pairs are disulfide-bonded: cysteine 325-cysteine 391, cysteine 354-cysteine 423, and cysteine 358-cysteine 425.

Belongs to the TGF-beta family. As to quaternary structure, homodimer; disulfide-linked. Interacts with twsg1.

The protein resides in the secreted. Functionally, growth factor of the TGF-beta superfamily that plays important role in various biological processes, including embryogenesis, hematopoiesis, neurogenesis and skeletal morphogenesis. Initiates the canonical BMP signaling cascade by associating with type I receptor ACVR1 and type II receptor ACVR2A. Once all three components are bound together in a complex at the cell surface, ACVR2A phosphorylates and activates ACVR1. In turn, ACVR1 propagates signal by phosphorylating SMAD1/5/8 that travel to the nucleus and act as activators and repressors of transcription of target genes. This is Bone morphogenetic protein 7 (bmp7) from Xenopus laevis (African clawed frog).